The sequence spans 314 residues: Serine protease 46 (314 aa).

Residues 44-281 (VVNGKAVEVG…FTQWIKRQIG (238 aa)) form the Peptidase S1 domain. A disulfide bridge links cysteine 69 with cysteine 85. Active-site charge relay system residues include histidine 84 and aspartate 130. 3 disulfides stabilise this stretch: cysteine 164-cysteine 239, cysteine 197-cysteine 219, and cysteine 229-cysteine 257. Serine 233 serves as the catalytic Charge relay system. The helical transmembrane segment at 293 to 313 (FLSPFILTGYILLVSLGSLWL) threads the bilayer.

This sequence belongs to the peptidase S1 family.

It localises to the membrane. This is Serine protease 46 (Prss46) from Mus musculus (Mouse).